We begin with the raw amino-acid sequence, 164 residues long: Superoxide dismutase [Cu-Zn] 3 (164 aa).

Cu cation is bound by residues His51, His53, and His68. Residues Cys62 and Cys151 are joined by a disulfide bond. Zn(2+)-binding residues include His68, His76, His85, and Asp88. Residue His125 coordinates Cu cation. Positions 162 to 164 (AKL) match the Peroxisome localization signal motif.

It belongs to the Cu-Zn superoxide dismutase family. Homodimer. It depends on Cu cation as a cofactor. Zn(2+) is required as a cofactor. As to expression, expressed in leaves (at protein level).

Its subcellular location is the peroxisome. The catalysed reaction is 2 superoxide + 2 H(+) = H2O2 + O2. In terms of biological role, destroys radicals which are normally produced within the cells and which are toxic to biological systems. The polypeptide is Superoxide dismutase [Cu-Zn] 3 (CSD3) (Arabidopsis thaliana (Mouse-ear cress)).